Consider the following 83-residue polypeptide: MVLAVDLLNPSHESEMRKHKLKQLVQGPRSFFMDVKCPGCFNITTVFSHAQTVVICGSCASVLCQPTGGKARLMEGCSFRRKN.

Residues 37–59 form a C4-type zinc finger; that stretch reads CPGCFNITTVFSHAQTVVICGSC.

Belongs to the eukaryotic ribosomal protein eS27 family. Component of the small ribosomal subunit (SSU). Mature yeast ribosomes consist of a small (40S) and a large (60S) subunit. The 40S small subunit contains 1 molecule of ribosomal RNA (18S rRNA) and at least 33 different proteins. The large 60S subunit contains 3 rRNA molecules (25S, 5.8S and 5S rRNA) and at least 46 different proteins. It depends on Zn(2+) as a cofactor.

It localises to the cytoplasm. In terms of biological role, component of the ribosome, a large ribonucleoprotein complex responsible for the synthesis of proteins in the cell. The small ribosomal subunit (SSU) binds messenger RNAs (mRNAs) and translates the encoded message by selecting cognate aminoacyl-transfer RNA (tRNA) molecules. The large subunit (LSU) contains the ribosomal catalytic site termed the peptidyl transferase center (PTC), which catalyzes the formation of peptide bonds, thereby polymerizing the amino acids delivered by tRNAs into a polypeptide chain. The nascent polypeptides leave the ribosome through a tunnel in the LSU and interact with protein factors that function in enzymatic processing, targeting, and the membrane insertion of nascent chains at the exit of the ribosomal tunnel. In Schizosaccharomyces pombe (strain 972 / ATCC 24843) (Fission yeast), this protein is Small ribosomal subunit protein eS27 (rps27).